A 180-amino-acid polypeptide reads, in one-letter code: NADH-quinone oxidoreductase subunit I (180 aa).

2 4Fe-4S ferredoxin-type domains span residues 50 to 80 (LTRDPDGEERCVACNLCAVACPVGCISLQKA) and 90 to 119 (EFFRVNFSRCIFCGFCEEACPTTAIQLTPD). [4Fe-4S] cluster contacts are provided by Cys-60, Cys-63, Cys-66, Cys-70, Cys-99, Cys-102, Cys-105, and Cys-109.

Belongs to the complex I 23 kDa subunit family. NDH-1 is composed of 13 different subunits. Subunits NuoA, H, J, K, L, M, N constitute the membrane sector of the complex. It depends on [4Fe-4S] cluster as a cofactor.

It is found in the cell inner membrane. The catalysed reaction is a quinone + NADH + 5 H(+)(in) = a quinol + NAD(+) + 4 H(+)(out). Its function is as follows. NDH-1 shuttles electrons from NADH, via FMN and iron-sulfur (Fe-S) centers, to quinones in the respiratory chain. The immediate electron acceptor for the enzyme in this species is believed to be ubiquinone. Couples the redox reaction to proton translocation (for every two electrons transferred, four hydrogen ions are translocated across the cytoplasmic membrane), and thus conserves the redox energy in a proton gradient. This chain is NADH-quinone oxidoreductase subunit I, found in Pectobacterium atrosepticum (strain SCRI 1043 / ATCC BAA-672) (Erwinia carotovora subsp. atroseptica).